Reading from the N-terminus, the 87-residue chain is Asparagine--tRNA ligase, cytoplasmic (87 aa).

It belongs to the class-II aminoacyl-tRNA synthetase family.

It localises to the cytoplasm. It carries out the reaction tRNA(Asn) + L-asparagine + ATP = L-asparaginyl-tRNA(Asn) + AMP + diphosphate + H(+). This Saccharomyces paradoxus (Yeast) protein is Asparagine--tRNA ligase, cytoplasmic (DED81).